The chain runs to 701 residues: Elongation factor G (701 aa).

The tr-type G domain occupies 8-290; sequence ERYRNIGISA…AVVDYLPAPT (283 aa). Residues 17-24, 88-92, and 142-145 contribute to the GTP site; these read AHIDAGKT, DTPGH, and NKMD.

It belongs to the TRAFAC class translation factor GTPase superfamily. Classic translation factor GTPase family. EF-G/EF-2 subfamily.

It is found in the cytoplasm. Catalyzes the GTP-dependent ribosomal translocation step during translation elongation. During this step, the ribosome changes from the pre-translocational (PRE) to the post-translocational (POST) state as the newly formed A-site-bound peptidyl-tRNA and P-site-bound deacylated tRNA move to the P and E sites, respectively. Catalyzes the coordinated movement of the two tRNA molecules, the mRNA and conformational changes in the ribosome. The protein is Elongation factor G of Aeromonas salmonicida (strain A449).